The sequence spans 157 residues: Serine-protein kinase RsbW (157 aa).

This sequence belongs to the anti-sigma-factor family.

It carries out the reaction L-seryl-[protein] + ATP = O-phospho-L-seryl-[protein] + ADP + H(+). The enzyme catalyses L-threonyl-[protein] + ATP = O-phospho-L-threonyl-[protein] + ADP + H(+). Functionally, negative regulator of sigma-B activity. Phosphorylates and inactivates its specific antagonist protein, RsbV. Upon phosphorylation of RsbV, RsbW is released and binds to sigma-B, thereby blocking its ability to form an RNA polymerase holoenzyme (E-sigma-B). In Listeria monocytogenes serovar 1/2a (strain ATCC BAA-679 / EGD-e), this protein is Serine-protein kinase RsbW.